The chain runs to 236 residues: LexA repressor (236 aa).

Positions 26-46 form a DNA-binding region, H-T-H motif; it reads FDEMKDALDLRSKSGIHRLII. Active-site for autocatalytic cleavage activity residues include Ser157 and Lys195.

It belongs to the peptidase S24 family. As to quaternary structure, homodimer.

The catalysed reaction is Hydrolysis of Ala-|-Gly bond in repressor LexA.. In terms of biological role, represses a number of genes involved in the response to DNA damage (SOS response), including recA and lexA. In the presence of single-stranded DNA, RecA interacts with LexA causing an autocatalytic cleavage which disrupts the DNA-binding part of LexA, leading to derepression of the SOS regulon and eventually DNA repair. This Methylocella silvestris (strain DSM 15510 / CIP 108128 / LMG 27833 / NCIMB 13906 / BL2) protein is LexA repressor.